We begin with the raw amino-acid sequence, 667 residues long: UvrABC system protein C (667 aa).

In terms of domain architecture, GIY-YIG spans 43 to 122 (AEPGCYLMRD…IKNQQPHFNV (80 aa)). Residues 232 to 267 (QELKVLLEKQMERYSDRMDYESAANIRDQIKGLEQL) enclose the UVR domain.

This sequence belongs to the UvrC family. Interacts with UvrB in an incision complex.

It localises to the cytoplasm. Its function is as follows. The UvrABC repair system catalyzes the recognition and processing of DNA lesions. UvrC both incises the 5' and 3' sides of the lesion. The N-terminal half is responsible for the 3' incision and the C-terminal half is responsible for the 5' incision. This is UvrABC system protein C from Prochlorococcus marinus (strain MIT 9313).